We begin with the raw amino-acid sequence, 659 residues long: Exoribonuclease 2 (659 aa).

The RNB domain occupies 189–532 (REDLTHLYFT…HRLIKQVLSN (344 aa)). One can recognise an S1 motif domain in the interval 576–658 (NVEFDGEIQD…ETRSVVGDVL (83 aa)).

It belongs to the RNR ribonuclease family. RNase II subfamily.

It localises to the cytoplasm. It carries out the reaction Exonucleolytic cleavage in the 3'- to 5'-direction to yield nucleoside 5'-phosphates.. Its function is as follows. Involved in mRNA degradation. Hydrolyzes single-stranded polyribonucleotides processively in the 3' to 5' direction. The protein is Exoribonuclease 2 of Glaesserella parasuis serovar 5 (strain SH0165) (Haemophilus parasuis).